The primary structure comprises 83 residues: Small ribosomal subunit protein bS16 (83 aa).

The protein belongs to the bacterial ribosomal protein bS16 family.

This Pseudomonas fluorescens (strain ATCC BAA-477 / NRRL B-23932 / Pf-5) protein is Small ribosomal subunit protein bS16.